Consider the following 210-residue polypeptide: Small ribosomal subunit protein uS3 (210 aa).

Residues 39–107 (IREKLMEKLK…EILLDIQEVK (69 aa)) enclose the KH type-2 domain.

The protein belongs to the universal ribosomal protein uS3 family. Part of the 30S ribosomal subunit. Forms a tight complex with proteins S10 and S14.

Its function is as follows. Binds the lower part of the 30S subunit head. Binds mRNA in the 70S ribosome, positioning it for translation. The sequence is that of Small ribosomal subunit protein uS3 from Opitutus terrae (strain DSM 11246 / JCM 15787 / PB90-1).